The chain runs to 169 residues: UPF0725 protein At2g19200 (169 aa).

This sequence belongs to the UPF0725 (EMB2204) family.

The polypeptide is UPF0725 protein At2g19200 (Arabidopsis thaliana (Mouse-ear cress)).